Reading from the N-terminus, the 704-residue chain is Tryptophan synthase (704 aa).

The tract at residues 1 to 292 (MEAIKKVFEQ…QLTPNAETAK (292 aa)) is tryptophan synthase alpha chain. Catalysis depends on proton acceptor residues glutamate 49 and aspartate 60. The tract at residues 293–704 (GVENILPARF…HVSSNAIPSK (412 aa)) is tryptophan synthase beta chain. Lysine 380 is subject to N6-(pyridoxal phosphate)lysine.

This sequence in the N-terminal section; belongs to the TrpA family. It in the C-terminal section; belongs to the TrpB family. Pyridoxal 5'-phosphate serves as cofactor.

It catalyses the reaction (1S,2R)-1-C-(indol-3-yl)glycerol 3-phosphate + L-serine = D-glyceraldehyde 3-phosphate + L-tryptophan + H2O. The protein operates within amino-acid biosynthesis; L-tryptophan biosynthesis; L-tryptophan from chorismate: step 5/5. This is Tryptophan synthase (TRP-1) from Coprinopsis cinerea (strain Okayama-7 / 130 / ATCC MYA-4618 / FGSC 9003) (Inky cap fungus).